We begin with the raw amino-acid sequence, 380 residues long: Erythronate-4-phosphate dehydrogenase (380 aa).

Positions 45 and 66 each coordinate substrate. D146 contacts NAD(+). The active site involves R207. NAD(+) is bound at residue D232. E237 is a catalytic residue. The Proton donor role is filled by H254. G257 contacts NAD(+). Y258 is a substrate binding site.

The protein belongs to the D-isomer specific 2-hydroxyacid dehydrogenase family. PdxB subfamily. In terms of assembly, homodimer.

Its subcellular location is the cytoplasm. The enzyme catalyses 4-phospho-D-erythronate + NAD(+) = (R)-3-hydroxy-2-oxo-4-phosphooxybutanoate + NADH + H(+). Its pathway is cofactor biosynthesis; pyridoxine 5'-phosphate biosynthesis; pyridoxine 5'-phosphate from D-erythrose 4-phosphate: step 2/5. Functionally, catalyzes the oxidation of erythronate-4-phosphate to 3-hydroxy-2-oxo-4-phosphonooxybutanoate. The polypeptide is Erythronate-4-phosphate dehydrogenase (Marinomonas sp. (strain MWYL1)).